The following is a 199-amino-acid chain: Recombination protein RecR (199 aa).

The C4-type zinc finger occupies 58–73 (CVNCGNIGTGDLCEIC). Positions 81–176 (GEICVVEDVA…TLSSLAQGVP (96 aa)) constitute a Toprim domain.

This sequence belongs to the RecR family.

Its function is as follows. May play a role in DNA repair. It seems to be involved in an RecBC-independent recombinational process of DNA repair. It may act with RecF and RecO. This Jannaschia sp. (strain CCS1) protein is Recombination protein RecR.